Consider the following 545-residue polypeptide: ATP synthase subunit alpha (545 aa).

An ATP-binding site is contributed by 173–180; the sequence is GDRQTGKS.

It belongs to the ATPase alpha/beta chains family. In terms of assembly, F-type ATPases have 2 components, CF(1) - the catalytic core - and CF(0) - the membrane proton channel. CF(1) has five subunits: alpha(3), beta(3), gamma(1), delta(1), epsilon(1). CF(0) has three main subunits: a(1), b(2) and c(9-12). The alpha and beta chains form an alternating ring which encloses part of the gamma chain. CF(1) is attached to CF(0) by a central stalk formed by the gamma and epsilon chains, while a peripheral stalk is formed by the delta and b chains.

The protein localises to the cell membrane. It carries out the reaction ATP + H2O + 4 H(+)(in) = ADP + phosphate + 5 H(+)(out). Produces ATP from ADP in the presence of a proton gradient across the membrane. The alpha chain is a regulatory subunit. The polypeptide is ATP synthase subunit alpha (Arthrobacter sp. (strain FB24)).